The sequence spans 208 residues: 3-demethoxyubiquinol 3-hydroxylase (208 aa).

Residues Glu57, Glu87, His90, Glu139, Glu171, and His174 each coordinate Fe cation.

Belongs to the COQ7 family. It depends on Fe cation as a cofactor.

Its subcellular location is the cell membrane. It carries out the reaction a 5-methoxy-2-methyl-3-(all-trans-polyprenyl)benzene-1,4-diol + AH2 + O2 = a 3-demethylubiquinol + A + H2O. It participates in cofactor biosynthesis; ubiquinone biosynthesis. Catalyzes the hydroxylation of 2-nonaprenyl-3-methyl-6-methoxy-1,4-benzoquinol during ubiquinone biosynthesis. The protein is 3-demethoxyubiquinol 3-hydroxylase of Verminephrobacter eiseniae (strain EF01-2).